Consider the following 380-residue polypeptide: Anthranilate phosphoribosyltransferase (380 aa).

Residues Gly-109, Asn-119, Ser-121, Thr-122, Lys-142, Ser-144, and Ser-146 each contribute to the 5-phospho-alpha-D-ribose 1-diphosphate site. The Mg(2+) site is built by Asp-258 and Glu-259.

It belongs to the anthranilate phosphoribosyltransferase family. As to quaternary structure, homodimer. Mg(2+) is required as a cofactor.

The catalysed reaction is N-(5-phospho-beta-D-ribosyl)anthranilate + diphosphate = 5-phospho-alpha-D-ribose 1-diphosphate + anthranilate. The protein operates within amino-acid biosynthesis; L-tryptophan biosynthesis; L-tryptophan from chorismate: step 2/5. Catalyzes the transfer of the phosphoribosyl group of 5-phosphorylribose-1-pyrophosphate (PRPP) to anthranilate to yield N-(5'-phosphoribosyl)-anthranilate (PRA), the second step in tryptophan biosynthesis. In Saccharomyces cerevisiae (strain ATCC 204508 / S288c) (Baker's yeast), this protein is Anthranilate phosphoribosyltransferase.